We begin with the raw amino-acid sequence, 489 residues long: ATP-dependent zinc metalloprotease FtsH 3 (489 aa).

At 1-14 (MNPRPVRPGGSLQQ) the chain is on the cytoplasmic side. A helical transmembrane segment spans residues 15–31 (SLLALGSLSVAVGLAVW). Residues 32–489 (QQRTLGRGRS…GPRPARPAMN (458 aa)) lie on the Extracellular side of the membrane. 95–102 (GPPGTGKT) contacts ATP. Residue His-315 participates in Zn(2+) binding. Residue Glu-316 is part of the active site. 2 residues coordinate Zn(2+): His-319 and Asp-391.

In the central section; belongs to the AAA ATPase family. It in the C-terminal section; belongs to the peptidase M41 family. Homohexamer. Requires Zn(2+) as cofactor.

The protein localises to the cell membrane. In terms of biological role, acts as a processive, ATP-dependent zinc metallopeptidase for both cytoplasmic and membrane proteins. Plays a role in the quality control of integral membrane proteins. The polypeptide is ATP-dependent zinc metalloprotease FtsH 3 (Sphaerobacter thermophilus (strain ATCC 49802 / DSM 20745 / KCCM 41009 / NCIMB 13125 / S 6022)).